A 506-amino-acid chain; its full sequence is Anaerobic nitric oxide reductase transcription regulator NorR (506 aa).

Residue Asp57 is modified to 4-aspartylphosphate. Residues 187-416 (MIGLSPAMTQ…LEHAIHRAVV (230 aa)) form the Sigma-54 factor interaction domain. ATP is bound by residues 215-222 (GETGTGKE) and 278-287 (ADNGTLFLDE). Residues 481–500 (WAASARALETDVANLHRLAK) constitute a DNA-binding region (H-T-H motif).

Its pathway is nitrogen metabolism; nitric oxide reduction. Its function is as follows. Required for the expression of anaerobic nitric oxide (NO) reductase, acts as a transcriptional activator for at least the norVW operon. Activation also requires sigma-54. In Salmonella paratyphi C (strain RKS4594), this protein is Anaerobic nitric oxide reductase transcription regulator NorR.